The primary structure comprises 207 residues: 8-oxoguanine DNA glycosylase/AP lyase (207 aa).

Residues Lys-128 and Asp-146 contribute to the active site.

This sequence belongs to the type-2 OGG1 family.

The enzyme catalyses 2'-deoxyribonucleotide-(2'-deoxyribose 5'-phosphate)-2'-deoxyribonucleotide-DNA = a 3'-end 2'-deoxyribonucleotide-(2,3-dehydro-2,3-deoxyribose 5'-phosphate)-DNA + a 5'-end 5'-phospho-2'-deoxyribonucleoside-DNA + H(+). Its function is as follows. Catalyzes the excision of an oxidatively damaged form of guanine (7,8-dihydro-8-oxoguanine = 8-oxoG) from DNA. Also cleaves the DNA backbone at apurinic/apyrimidinic sites (AP sites). The chain is 8-oxoguanine DNA glycosylase/AP lyase from Saccharolobus solfataricus (strain ATCC 35092 / DSM 1617 / JCM 11322 / P2) (Sulfolobus solfataricus).